Reading from the N-terminus, the 222-residue chain is Elongation factor 1-beta' (222 aa).

The tract at residues 71 to 113 is disordered; sequence SQGTSPLTAGAKPTAPAPAAKDDDDDDVDLFGSGDEEEDAEAE. Positions 78-89 are enriched in low complexity; that stretch reads TAGAKPTAPAPA. Positions 92 to 111 are enriched in acidic residues; that stretch reads DDDDDDVDLFGSGDEEEDAE.

This sequence belongs to the EF-1-beta/EF-1-delta family. As to quaternary structure, EF-1 is composed of 4 subunits: alpha, beta, beta' and gamma. Post-translationally, phosphorylated.

Functionally, EF-1-beta and EF-1-beta' stimulate the exchange of GDP bound to EF-1-alpha to GTP. This is Elongation factor 1-beta' from Bombyx mori (Silk moth).